Reading from the N-terminus, the 160-residue chain is NADH-quinone oxidoreductase subunit B (160 aa).

Residues C37, C38, C102, and C132 each contribute to the [4Fe-4S] cluster site.

The protein belongs to the complex I 20 kDa subunit family. NDH-1 is composed of 14 different subunits. Subunits NuoB, C, D, E, F, and G constitute the peripheral sector of the complex. Requires [4Fe-4S] cluster as cofactor.

The protein resides in the cell inner membrane. It catalyses the reaction a quinone + NADH + 5 H(+)(in) = a quinol + NAD(+) + 4 H(+)(out). Its function is as follows. NDH-1 shuttles electrons from NADH, via FMN and iron-sulfur (Fe-S) centers, to quinones in the respiratory chain. Couples the redox reaction to proton translocation (for every two electrons transferred, four hydrogen ions are translocated across the cytoplasmic membrane), and thus conserves the redox energy in a proton gradient. In Neisseria meningitidis serogroup A / serotype 4A (strain DSM 15465 / Z2491), this protein is NADH-quinone oxidoreductase subunit B.